The primary structure comprises 510 residues: GMP synthase [glutamine-hydrolyzing] (510 aa).

Residues 5–195 enclose the Glutamine amidotransferase type-1 domain; the sequence is LVLVVDFGGQ…LFNVCNLKGD (191 aa). Cys-82 (nucleophile) is an active-site residue. Catalysis depends on residues His-169 and Glu-171. One can recognise a GMPS ATP-PPase domain in the interval 196–385; that stretch reads WSMSSFAEQQ…LGIPHKLVWR (190 aa). 223 to 229 provides a ligand contact to ATP; the sequence is SGGVDSS.

As to quaternary structure, homodimer.

It carries out the reaction XMP + L-glutamine + ATP + H2O = GMP + L-glutamate + AMP + diphosphate + 2 H(+). It functions in the pathway purine metabolism; GMP biosynthesis; GMP from XMP (L-Gln route): step 1/1. In terms of biological role, catalyzes the synthesis of GMP from XMP. The chain is GMP synthase [glutamine-hydrolyzing] from Clostridium botulinum (strain Okra / Type B1).